The following is a 384-amino-acid chain: Substance-K receptor (384 aa).

Topologically, residues 1-32 (MGACVVMTDINISSGLDSNATGITAFSMPGWQ) are extracellular. N-linked (GlcNAc...) asparagine glycosylation is found at Asn-11 and Asn-19. A helical membrane pass occupies residues 33–56 (LALWTAAYLALVLVAVMGNATVIW). At 57–69 (IILAHQRMRTVTN) the chain is on the cytoplasmic side. A helical membrane pass occupies residues 70 to 90 (YFIVNLALADLCMAAFNAAFN). Residues 91–107 (FVYASHNIWYFGRAFCY) are Extracellular-facing. Cys-106 and Cys-181 form a disulfide bridge. A helical membrane pass occupies residues 108-129 (FQNLFPITAMFVSIYSMTAIAA). The Cytoplasmic portion of the chain corresponds to 130–149 (DRYMAIVHPFQPRLSAPGTR). Residues 150-170 (AVIAGIWLVALALAFPQCFYS) form a helical membrane-spanning segment. The Extracellular segment spans residues 171-196 (TITTDEGATKCVVAWPEDSGGKMLLL). Residues 197–218 (YHLIVIALIYFLPLVVMFVAYS) traverse the membrane as a helical segment. The Cytoplasmic segment spans residues 219–251 (VIGLTLWRRSVPGHQAHGANLRHLQAKKKFVKT). The chain crosses the membrane as a helical span at residues 252–272 (MVLVVVTFAICWLPYHLYFIL). Residues 273–290 (GTFQEDIYCHKFIQQVYL) are Extracellular-facing. A helical membrane pass occupies residues 291 to 310 (ALFWLAMSSTMYNPIIYCCL). The Cytoplasmic portion of the chain corresponds to 311 to 384 (NHRFRSGFRL…SPQAGVSTEP (74 aa)). Cys-324 is lipidated: S-palmitoyl cysteine.

This sequence belongs to the G-protein coupled receptor 1 family.

The protein localises to the cell membrane. This is a receptor for the tachykinin neuropeptide substance K (neurokinin A). It is associated with G proteins that activate a phosphatidylinositol-calcium second messenger system. The rank order of affinity of this receptor to tachykinins is: substance K &gt; neuromedin-K &gt; substance P. This is Substance-K receptor (TACR2) from Bos taurus (Bovine).